A 108-amino-acid polypeptide reads, in one-letter code: Probable 4-amino-4-deoxy-L-arabinose-phosphoundecaprenol flippase subunit ArnE (108 aa).

3 helical membrane passes run 36–56 (SLWL…LVLQ), 58–78 (LDVG…TLAG), and 85–105 (PVDV…FQLG).

This sequence belongs to the ArnE family. Heterodimer of ArnE and ArnF.

The protein localises to the cell inner membrane. The protein operates within bacterial outer membrane biogenesis; lipopolysaccharide biosynthesis. Translocates 4-amino-4-deoxy-L-arabinose-phosphoundecaprenol (alpha-L-Ara4N-phosphoundecaprenol) from the cytoplasmic to the periplasmic side of the inner membrane. The chain is Probable 4-amino-4-deoxy-L-arabinose-phosphoundecaprenol flippase subunit ArnE from Pseudomonas syringae pv. syringae (strain B728a).